Here is a 917-residue protein sequence, read N- to C-terminus: Translation initiation factor IF-2 (917 aa).

Residues glutamate 102–glutamate 249 are compositionally biased toward basic and acidic residues. Positions glutamate 102–histidine 326 are disordered. The span at arginine 279–asparagine 293 shows a compositional bias: basic residues. The segment covering arginine 294–alanine 306 has biased composition (basic and acidic residues). One can recognise a tr-type G domain in the interval serine 416 to lysine 585. A G1 region spans residues glycine 425–threonine 432. Glycine 425–threonine 432 contacts GTP. The G2 stretch occupies residues glycine 450–histidine 454. The interval aspartate 471–glycine 474 is G3. Residues aspartate 471–histidine 475 and asparagine 525–aspartate 528 contribute to the GTP site. The tract at residues asparagine 525–aspartate 528 is G4. The tract at residues serine 561 to lysine 563 is G5.

Belongs to the TRAFAC class translation factor GTPase superfamily. Classic translation factor GTPase family. IF-2 subfamily.

It is found in the cytoplasm. One of the essential components for the initiation of protein synthesis. Protects formylmethionyl-tRNA from spontaneous hydrolysis and promotes its binding to the 30S ribosomal subunits. Also involved in the hydrolysis of GTP during the formation of the 70S ribosomal complex. The polypeptide is Translation initiation factor IF-2 (infB) (Proteus vulgaris).